The following is a 441-amino-acid chain: Transcriptional regulatory protein ZraR (441 aa).

Residues 7-121 (DILVVDDDIS…NLQATLEKAL (115 aa)) enclose the Response regulatory domain. Asp-56 carries the post-translational modification 4-aspartylphosphate. The Sigma-54 factor interaction domain maps to 141 to 370 (MVGKSPAMQH…LENAVERAVV (230 aa)). ATP contacts are provided by Gly-172, Thr-173, Arg-329, and Arg-359. The H-T-H motif DNA-binding region spans 421–440 (KTEAARQLGITRKTLLAKLS).

Phosphorylated by ZraS.

It localises to the cytoplasm. Its activity is regulated as follows. Activity of the ZraS/ZraR two-component system is repressed by the zinc-bound form of ZraP, which probably interacts with the periplasmic region of ZraS. In terms of biological role, part of the Zra signaling pathway, an envelope stress response (ESR) system composed of the periplasmic accessory protein ZraP, the histidine kinase ZraS and the transcriptional regulator ZraR. The ZraPSR system contributes to antibiotic resistance and is important for membrane integrity in the presence of membrane-targeting biocides. ZraR is a member of the two-component regulatory system ZraS/ZraR. When activated by ZraS, acts in conjunction with sigma-54 to regulate the expression of zraP in the presence of high Zn(2+) or Pb(2+) concentrations. Also positively autoregulates the expression of the zraSR operon. The polypeptide is Transcriptional regulatory protein ZraR (zraR) (Escherichia coli O157:H7).